Reading from the N-terminus, the 316-residue chain is ATP synthase gamma chain (316 aa).

It belongs to the ATPase gamma chain family. As to quaternary structure, F-type ATPases have 2 components, CF(1) - the catalytic core - and CF(0) - the membrane proton channel. CF(1) has five subunits: alpha(3), beta(3), gamma(1), delta(1), epsilon(1). CF(0) has three main subunits: a, b and c.

It localises to the cellular thylakoid membrane. Produces ATP from ADP in the presence of a proton gradient across the membrane. The gamma chain is believed to be important in regulating ATPase activity and the flow of protons through the CF(0) complex. The sequence is that of ATP synthase gamma chain from Prochlorococcus marinus (strain MIT 9301).